An 888-amino-acid polypeptide reads, in one-letter code: E3 ubiquitin-protein ligase SH3RF1 (888 aa).

The RING-type zinc finger occupies 12-53 (CPVCLERLDASAKVLPCQHTFCKRCLLGIVGSRNELRCPECR). The segment covering 108–127 (SSKDLQSSQGGQQPRVQSWS) has biased composition (polar residues). The tract at residues 108 to 128 (SSKDLQSSQGGQQPRVQSWSP) is disordered. SH3 domains follow at residues 134–193 (PQLP…IIKP) and 196–259 (QPPP…FNSA). Residues 275 to 321 (DAGECSSAAAQSSTAPKHSDTKKNTKKRHSFTSLTMANKSSQASQNR) are disordered. An interaction with RAC1 region spans residues 292 to 362 (HSDTKKNTKK…APSQVHISTT (71 aa)). Ser-304 bears the Phosphoserine mark. Polar residues predominate over residues 305-321 (FTSLTMANKSSQASQNR). Residues 440-543 (HLRPQTRPSV…STAGGPAQKL (104 aa)) form an interaction with AKT2 region. The SH3 3 domain maps to 445 to 506 (TRPSVYVAIY…PGNYVAPVTR (62 aa)). Disordered regions lie at residues 516 to 548 (VPMS…GNGV), 620 to 639 (SVGL…LMPG), and 684 to 741 (TVLP…ASPT). The span at 520–535 (TAGQTSRGVTMVSPST) shows a compositional bias: polar residues. Ser-532 is modified (phosphoserine). Residues 692–704 (SPDSASSACGNSS) are compositionally biased toward polar residues. A compositionally biased stretch (basic and acidic residues) spans 707-718 (KPDKDSKKEKKG). Ser-735 carries the phosphoserine modification. In terms of domain architecture, SH3 4 spans 829-888 (VVCERHRVVVSYPPQSEAELELKEGDIVFVHKKREDGWFKGTLQRNGKTGLFPGSFVENI).

The protein belongs to the SH3RF family. As to quaternary structure, interacts with RAC1; in a GTP-dependent manner. Interacts with MAP3K10/MLK2 and MAP3K11/MLK3. Interacts with MAPK8IP; this interaction leads to the PJAC complex (POSH-JIP or SH3RF1/MAPK8IP apoptotic complex) with a 1:1 ratio. Interacts with SIAH1. Interacts with HERP1. Probably part of a signaling complex that may contain SH3RF1, MAPK8IP, DLK1, MAP2K4/MKK4, MAP2K7/MKK7, MAPK8/JNK1, MAPK9/JNK2, AKT1 and AKT2. Found in a complex with RAC2, MAP3K7/TAK1, MAP2K7/MKK7, MAPK8IP1/JIP1, MAPK8/JNK1 and MAPK9/JNK2. Found in a complex with RAC1, MAP3K11/MLK3, MAP2K7/MKK7, MAPK8IP1/JIP1 and MAPK8/JNK1. Interacts with SH3RF2. Post-translationally, phosphorylated at Ser-304 by AKT1 and AKT2. When phosphorylated, it has reduced ability to bind Rac. Autoubiquitinated. Ubiquitinated by SH3RF2, leading to proteasome-mediated degradation.

The protein localises to the cytoplasm. The protein resides in the perinuclear region. It is found in the cell projection. It localises to the lamellipodium. Its subcellular location is the golgi apparatus. The protein localises to the trans-Golgi network. The catalysed reaction is S-ubiquitinyl-[E2 ubiquitin-conjugating enzyme]-L-cysteine + [acceptor protein]-L-lysine = [E2 ubiquitin-conjugating enzyme]-L-cysteine + N(6)-ubiquitinyl-[acceptor protein]-L-lysine.. It participates in protein modification; protein ubiquitination. Has E3 ubiquitin-protein ligase activity. In the absence of an external substrate, it can catalyze self-ubiquitination. Stimulates ubiquitination of potassium channel KCNJ1, enhancing it's dynamin-dependent and clathrin-independent endocytosis. Acts as a scaffold protein that coordinates with MAPK8IP1/JIP1 in organizing different components of the JNK pathway, including RAC1 or RAC2, MAP3K11/MLK3 or MAP3K7/TAK1, MAP2K7/MKK7, MAPK8/JNK1 and/or MAPK9/JNK2 into a functional multiprotein complex to ensure the effective activation of the JNK signaling pathway. Regulates the differentiation of CD4(+) and CD8(+) T-cells and promotes T-helper 1 (Th1) cell differentiation. Regulates the activation of MAPK8/JNK1 and MAPK9/JNK2 in CD4(+) T-cells and the activation of MAPK8/JNK1 in CD8(+) T-cells. Plays a crucial role in the migration of neocortical neurons in the developing brain. Controls proper cortical neuronal migration and the formation of proximal cytoplasmic dilation in the leading process (PCDLP) in migratory neocortical neurons by regulating the proper localization of activated RAC1 and F-actin assembly. In terms of biological role, (Microbial infection) Plays an essential role in the targeting of HIV-1 Gag to the plasma membrane, this function is dependent on it's RING domain, and hence it's E3 ligase activity. This Homo sapiens (Human) protein is E3 ubiquitin-protein ligase SH3RF1 (SH3RF1).